The primary structure comprises 229 residues: V-type proton ATPase subunit E (229 aa).

The protein belongs to the V-ATPase E subunit family. In terms of assembly, V-ATPase is a heteromultimeric enzyme composed of a peripheral catalytic V1 complex (components A to H) attached to an integral membrane V0 proton pore complex (components: a, c, c', c'' and d).

In terms of biological role, subunit of the peripheral V1 complex of vacuolar ATPase essential for assembly or catalytic function. V-ATPase is responsible for acidifying a variety of intracellular compartments in eukaryotic cells. This chain is V-type proton ATPase subunit E (VATE), found in Spinacia oleracea (Spinach).